A 286-amino-acid polypeptide reads, in one-letter code: Shikimate dehydrogenase (NADP(+)) (286 aa).

Residues 22 to 24 (SRS) and Thr71 each bind shikimate. The Proton acceptor role is filled by Lys75. Position 87 (Glu87) interacts with NADP(+). Shikimate-binding residues include Asn96 and Asp111. NADP(+)-binding positions include 136-140 (GAGGA), 160-165 (NRTVER), and Ile225. Tyr227 provides a ligand contact to shikimate. Gly248 contributes to the NADP(+) binding site.

This sequence belongs to the shikimate dehydrogenase family. Homodimer.

It carries out the reaction shikimate + NADP(+) = 3-dehydroshikimate + NADPH + H(+). The protein operates within metabolic intermediate biosynthesis; chorismate biosynthesis; chorismate from D-erythrose 4-phosphate and phosphoenolpyruvate: step 4/7. In terms of biological role, involved in the biosynthesis of the chorismate, which leads to the biosynthesis of aromatic amino acids. Catalyzes the reversible NADPH linked reduction of 3-dehydroshikimate (DHSA) to yield shikimate (SA). The protein is Shikimate dehydrogenase (NADP(+)) of Rhizobium rhizogenes (strain K84 / ATCC BAA-868) (Agrobacterium radiobacter).